Reading from the N-terminus, the 114-residue chain is Probable 4-amino-4-deoxy-L-arabinose-phosphoundecaprenol flippase subunit ArnE (114 aa).

The next 3 helical transmembrane spans lie at 41–61, 64–84, and 91–111; these read MWLW…LLVL, MDVG…TLVG, and PVDP…FQLG.

This sequence belongs to the ArnE family. As to quaternary structure, heterodimer of ArnE and ArnF.

The protein localises to the cell inner membrane. It participates in bacterial outer membrane biogenesis; lipopolysaccharide biosynthesis. Its function is as follows. Translocates 4-amino-4-deoxy-L-arabinose-phosphoundecaprenol (alpha-L-Ara4N-phosphoundecaprenol) from the cytoplasmic to the periplasmic side of the inner membrane. This Pseudomonas savastanoi pv. phaseolicola (strain 1448A / Race 6) (Pseudomonas syringae pv. phaseolicola (strain 1448A / Race 6)) protein is Probable 4-amino-4-deoxy-L-arabinose-phosphoundecaprenol flippase subunit ArnE.